Reading from the N-terminus, the 58-residue chain is Cholecystokinins (58 aa).

Tyrosine 52 bears the Sulfotyrosine mark. Residue phenylalanine 58 is modified to Phenylalanine amide.

The protein belongs to the gastrin/cholecystokinin family. In terms of assembly, binds to CCK-A receptors in the pancreas and CCK-B receptors in the brain. cholecystokinin 8 binds CCK-A receptors more potently than cholecystokinin 58, cholecystokinin 8 and cholecystokinin 58 bind CCK-B receptors with equal affinity. In terms of processing, the precursor is cleaved by proteases to produce a number of active cholecystokinins. Cholecystokinin 58 occurs in both sulfated (CCK58(s)) and nonsulfated (CCK58(ns)) forms, which differ in their receptor-binding activities. CCK58(s) binds to the CCK-A receptor with high affinity, CCK58(ns) binds poorly to the CCK-A receptor. CCK58(s) and CCK58(ns) both bind the CCK-B receptor. Post-translationally, the precursor is cleaved by ACE, which removes the Gly-Arg-Arg peptide at the C-terminus, leading to mature hormone.

It is found in the secreted. In terms of biological role, this peptide hormone induces gall bladder contraction and the release of pancreatic enzymes in the gut. Its function in the brain is not clear. Binding to CCK-A receptors stimulates amylase release from the pancreas, binding to CCK-B receptors stimulates gastric acid secretion. cholecystokinin 58 and cholecystokinin 8, but not cholecystokinin 58 desnonopeptide, stimulate amylase release from the pancreas. cholecystokinin 58, but not cholecystokinin 8, increases bile-pancreatic volume. The polypeptide is Cholecystokinins (Canis lupus familiaris (Dog)).